The primary structure comprises 398 residues: Succinate--CoA ligase [ADP-forming] subunit beta (398 aa).

Residues lysine 9–glutamate 254 enclose the ATP-grasp domain. ATP is bound by residues lysine 46, glycine 53–glycine 55, glutamate 109, alanine 112, and glutamate 117. Asparagine 209 and aspartate 223 together coordinate Mg(2+). Substrate-binding positions include asparagine 274 and glycine 331–methionine 333.

This sequence belongs to the succinate/malate CoA ligase beta subunit family. As to quaternary structure, heterotetramer of two alpha and two beta subunits. It depends on Mg(2+) as a cofactor.

The catalysed reaction is succinate + ATP + CoA = succinyl-CoA + ADP + phosphate. It carries out the reaction GTP + succinate + CoA = succinyl-CoA + GDP + phosphate. It functions in the pathway carbohydrate metabolism; tricarboxylic acid cycle; succinate from succinyl-CoA (ligase route): step 1/1. Functionally, succinyl-CoA synthetase functions in the citric acid cycle (TCA), coupling the hydrolysis of succinyl-CoA to the synthesis of either ATP or GTP and thus represents the only step of substrate-level phosphorylation in the TCA. The beta subunit provides nucleotide specificity of the enzyme and binds the substrate succinate, while the binding sites for coenzyme A and phosphate are found in the alpha subunit. This Brucella anthropi (strain ATCC 49188 / DSM 6882 / CCUG 24695 / JCM 21032 / LMG 3331 / NBRC 15819 / NCTC 12168 / Alc 37) (Ochrobactrum anthropi) protein is Succinate--CoA ligase [ADP-forming] subunit beta.